Consider the following 466-residue polypeptide: Ribulose bisphosphate carboxylase (466 aa).

Asn-111 is a binding site for substrate. The active-site Proton acceptor is the Lys-166. Lys-168 is a binding site for substrate. Mg(2+)-binding residues include Lys-191, Asp-193, and Glu-194. N6-carboxylysine is present on Lys-191. The Proton acceptor role is filled by His-287. 3 residues coordinate substrate: Arg-288, His-321, and Ser-368.

It belongs to the RuBisCO large chain family. Type II subfamily. Homodimer. Requires Mg(2+) as cofactor.

The enzyme catalyses 2 (2R)-3-phosphoglycerate + 2 H(+) = D-ribulose 1,5-bisphosphate + CO2 + H2O. It catalyses the reaction D-ribulose 1,5-bisphosphate + O2 = 2-phosphoglycolate + (2R)-3-phosphoglycerate + 2 H(+). In terms of biological role, ruBisCO catalyzes two reactions: the carboxylation of D-ribulose 1,5-bisphosphate, the primary event in carbon dioxide fixation, as well as the oxidative fragmentation of the pentose substrate. Both reactions occur simultaneously and in competition at the same active site. This Rhodospirillum rubrum (strain ATCC 11170 / ATH 1.1.1 / DSM 467 / LMG 4362 / NCIMB 8255 / S1) protein is Ribulose bisphosphate carboxylase.